The primary structure comprises 286 residues: Small ribosomal subunit protein uS15m (286 aa).

The N-terminal 33 residues, 1 to 33 (MSIVGRNAILNLRISLCPLFMGKRSFVSSPVSN), are a transit peptide targeting the mitochondrion.

The protein belongs to the universal ribosomal protein uS15 family. As to quaternary structure, component of the mitochondrial small ribosomal subunit (mt-SSU). Mature yeast 74S mitochondrial ribosomes consist of a small (37S) and a large (54S) subunit. The 37S small subunit contains a 15S ribosomal RNA (15S mt-rRNA) and 34 different proteins. The 54S large subunit contains a 21S rRNA (21S mt-rRNA) and 46 different proteins. Post-translationally, the precursor is processed in two steps involving mitochondrial intermediate peptidase (MIP) and mitochondrial processing peptidase (MPP).

It is found in the mitochondrion. In terms of biological role, component of the mitochondrial ribosome (mitoribosome), a dedicated translation machinery responsible for the synthesis of mitochondrial genome-encoded proteins, including at least some of the essential transmembrane subunits of the mitochondrial respiratory chain. The mitoribosomes are attached to the mitochondrial inner membrane and translation products are cotranslationally integrated into the membrane. The protein is Small ribosomal subunit protein uS15m (MRPS28) of Saccharomyces cerevisiae (strain ATCC 204508 / S288c) (Baker's yeast).